A 268-amino-acid chain; its full sequence is Ribosomal RNA small subunit methyltransferase A (268 aa).

S-adenosyl-L-methionine contacts are provided by asparagine 18, leucine 20, glycine 45, glutamate 66, aspartate 91, and asparagine 112.

This sequence belongs to the class I-like SAM-binding methyltransferase superfamily. rRNA adenine N(6)-methyltransferase family. RsmA subfamily.

It localises to the cytoplasm. It carries out the reaction adenosine(1518)/adenosine(1519) in 16S rRNA + 4 S-adenosyl-L-methionine = N(6)-dimethyladenosine(1518)/N(6)-dimethyladenosine(1519) in 16S rRNA + 4 S-adenosyl-L-homocysteine + 4 H(+). Specifically dimethylates two adjacent adenosines (A1518 and A1519) in the loop of a conserved hairpin near the 3'-end of 16S rRNA in the 30S particle. May play a critical role in biogenesis of 30S subunits. In Vibrio vulnificus (strain CMCP6), this protein is Ribosomal RNA small subunit methyltransferase A.